Here is a 125-residue protein sequence, read N- to C-terminus: Small ribosomal subunit protein eS8 (125 aa).

Over residues 1–23 the composition is skewed to basic residues; that stretch reads MQFQGRSRRKYTGAKLKSARGKR. The segment at 1-34 is disordered; it reads MQFQGRSRRKYTGAKLKSARGKRKFELGREPAAT.

It belongs to the eukaryotic ribosomal protein eS8 family. Part of the 30S ribosomal subunit.

The sequence is that of Small ribosomal subunit protein eS8 from Methanococcoides burtonii (strain DSM 6242 / NBRC 107633 / OCM 468 / ACE-M).